Reading from the N-terminus, the 660-residue chain is Polycomb protein SCMH1 (660 aa).

MBT repeat units follow at residues 28–126 and 134–235; these read FTWD…LQPP and SSWP…LQPP. The disordered stretch occupies residues 233-345; the sequence is QPPGTKVVIP…EPDTSTVPQD (113 aa). Basic residues-rich tracts occupy residues 273-284 and 305-320; these read RGRKPGKKRGRT and FPKK…RKPR. The segment covering 330–343 has biased composition (low complexity); sequence PTTSTPEPDTSTVP. The region spanning 593-658 is the SAM domain; it reads WTVEDVMQFV…SYHIDRLKQG (66 aa).

The protein belongs to the SCM family. As to quaternary structure, interacts with the SAM domain of PHC1 via its SAM domain in vitro. Associates with a PRC1-like complex. In terms of tissue distribution, strongly expressed in heart, muscle and pancreas. Weakly expressed in brain, placenta, lung, liver and kidney.

It is found in the nucleus. Associates with Polycomb group (PcG) multiprotein complexes; the complex class is required to maintain the transcriptionally repressive state of some genes. This chain is Polycomb protein SCMH1, found in Homo sapiens (Human).